Reading from the N-terminus, the 471-residue chain is Chitobiosyldiphosphodolichol beta-mannosyltransferase (471 aa).

Over 1–31 (MDTSSVTMHTERACCHQAQRAVAAMLDKAPS) the chain is Lumenal. Residues 32–52 (WLIWTAVLYVGLPFMLYWAVP) form a helical membrane-spanning segment. At 53–126 (YLFYHNKTKS…ALPGASNAGK (74 aa)) the chain is on the cytoplasmic side. The segment at residues 127–147 (SLGQTARKVVLQTCHIVRQLW) is an intramembrane region (helical). At 148 to 471 (ELRGCDYILI…MSELQVVRQS (324 aa)) the chain is on the cytoplasmic side.

The protein belongs to the glycosyltransferase group 1 family.

Its subcellular location is the endoplasmic reticulum membrane. It carries out the reaction an N,N'-diacetylchitobiosyl-diphospho-di-trans,poly-cis-dolichol + GDP-alpha-D-mannose = a beta-D-Man-(1-&gt;4)-beta-D-GlcNAc-(1-&gt;4)-alpha-D-GlcNAc-diphospho-di-trans,poly-cis-dolichol + GDP + H(+). It participates in protein modification; protein glycosylation. Functionally, participates in the formation of the lipid-linked precursor oligosaccharide for N-glycosylation. Involved in assembling the dolichol-pyrophosphate-GlcNAc(2)-Man(5) intermediate on the cytoplasmic surface of the ER. The sequence is that of Chitobiosyldiphosphodolichol beta-mannosyltransferase (ALG1) from Eremothecium gossypii (strain ATCC 10895 / CBS 109.51 / FGSC 9923 / NRRL Y-1056) (Yeast).